A 492-amino-acid polypeptide reads, in one-letter code: MSFTLAIVGRPNVGKSTLFNRLVGKRLALVDDQPGVTRDLREGAARLADLRFTVIDTAGLEDVTDDSLQGRMRRLTERAVDMADICLFMVDARVGITPTDLVFADILRKRAGHVVLAANKAEGAAADAGVIEAYSLGLGEPIRLSAEHGEGLNDLYTHLMPLADAYAERAAEDAPETDVALDEDSGDMEAALRMPTANKPLQVAVVGRPNAGKSTLVNQILGEDRLLTGPEAGITRDAISLRTDWVGPEGDVIPMRIFDTAGMRKKAKVQEKLEKLSVGDGLRAVKFAEVVVVLLDAAIPFEQQDLRIADLAEREGRAVVVAVNKWDIEENKQAKLNELRESFERLLPQLRGAPLVTVSARTGRGLDRLHKAVLRAYEVWNRRVTTAQLNRWLAGMLEAHPPPAPQGKRIKLRYMTQAKTRPPGFVVMCSHPDKVPDSYNRYLVNGLRLDFDMPGTPIRLWMRGQNDANPYKGRKKAPPSKLRKHTDGRRKD.

2 consecutive EngA-type G domains span residues Phe-3 to Ala-167 and Leu-201 to Asn-381. GTP is bound by residues Gly-9 to Ser-16, Asp-56 to Leu-60, Asn-119 to Glu-122, Gly-207 to Ser-214, Asp-259 to Met-263, and Asn-324 to Asp-327. In terms of domain architecture, KH-like spans Arg-382–Ala-468. Residues Met-462 to Asp-492 form a disordered region. The span at Lys-472–Asp-492 shows a compositional bias: basic residues.

The protein belongs to the TRAFAC class TrmE-Era-EngA-EngB-Septin-like GTPase superfamily. EngA (Der) GTPase family. In terms of assembly, associates with the 50S ribosomal subunit.

In terms of biological role, GTPase that plays an essential role in the late steps of ribosome biogenesis. This chain is GTPase Der, found in Roseobacter denitrificans (strain ATCC 33942 / OCh 114) (Erythrobacter sp. (strain OCh 114)).